Consider the following 438-residue polypeptide: Serine/threonine-protein kinase VIK (438 aa).

The segment at 1–31 (MSSDSPAAGDGGEQAAAGTSVPSPSYDKQKE) is disordered. 3 ANK repeats span residues 36–65 (SRTS…TLVH), 70–99 (DKRT…DVNA), and 103–133 (WKNT…SYGQ). The 266-residue stretch at 162 to 427 (FSNAAMIGKG…KRLEKIKETL (266 aa)) folds into the Protein kinase domain. Residues 168 to 176 (IGKGSFGEI) and lysine 189 each bind ATP. The Proton acceptor role is filled by aspartate 285.

The protein belongs to the protein kinase superfamily. Ser/Thr protein kinase family. Interacts with BRL2. Binds to MSSP1/TMT1 at the tonoplast. Phosphorylated. Restricted to mature vascular cells. Mostly expressed in mature leaves and seeds, and, to a lower level, in seedlings, young leaves, flowers and siliques.

It localises to the vacuole. The catalysed reaction is L-seryl-[protein] + ATP = O-phospho-L-seryl-[protein] + ADP + H(+). It carries out the reaction L-threonyl-[protein] + ATP = O-phospho-L-threonyl-[protein] + ADP + H(+). In terms of biological role, serine/threonine protein kinase which may function as an adapter protein for BRL2. Required during vascular development for the establishment of vein pattern in foliar organs. Mediates MSSP1/TMT1 phosphorylation and activation to enhance its carrier activity and consequently vacuolar sugar accumulation, particularly in response to cold. This Arabidopsis thaliana (Mouse-ear cress) protein is Serine/threonine-protein kinase VIK.